Reading from the N-terminus, the 413-residue chain is L-methionine gamma-lyase (413 aa).

Pyridoxal 5'-phosphate-binding positions include 75–77 (YGR) and 105–106 (GM). A substrate-binding site is contributed by Tyr-131. Position 218–220 (218–220 (SAT)) interacts with pyridoxal 5'-phosphate. Position 221 is an N6-(pyridoxal phosphate)lysine (Lys-221). A substrate-binding site is contributed by Arg-365. Residues 388–413 (RLPETAGAGREPSRTALRLPERAADR) are disordered.

Belongs to the trans-sulfuration enzymes family. As to quaternary structure, homotetramer; dimer of active dimers. It depends on pyridoxal 5'-phosphate as a cofactor.

The catalysed reaction is L-methionine + H2O = methanethiol + 2-oxobutanoate + NH4(+). The enzyme catalyses L-homocysteine + H2O = 2-oxobutanoate + hydrogen sulfide + NH4(+) + H(+). It carries out the reaction L-cysteine + H2O = hydrogen sulfide + pyruvate + NH4(+) + H(+). Its function is as follows. Catalyzes the alpha,gamma-elimination of L-methionine to produce methanethiol, 2-oxobutanoate and ammonia. Is probably involved in L-methionine catabolism. Is also able to catalyze the alpha,gamma-elimination of L-homocysteine, and, to a lesser extent, the alpha,beta-elimination of L-cysteine. The sequence is that of L-methionine gamma-lyase from Streptomyces avermitilis (strain ATCC 31267 / DSM 46492 / JCM 5070 / NBRC 14893 / NCIMB 12804 / NRRL 8165 / MA-4680).